The chain runs to 66 residues: Neurotoxin BmK AGP-SYPU1 (66 aa).

An LCN-type CS-alpha/beta domain is found at 2-64 (RDAYIAQNYN…KPIRIPGKCH (63 aa)). 4 cysteine pairs are disulfide-bonded: cysteine 12–cysteine 63, cysteine 16–cysteine 36, cysteine 22–cysteine 46, and cysteine 26–cysteine 48. Positions 65–66 (RR) are cleaved as a propeptide — removed by a carboxypeptidase.

As to expression, expressed by the venom gland.

The protein localises to the secreted. Functionally, alpha toxins bind voltage-independently at site-3 of sodium channels (Nav) and inhibit the inactivation of the activated channels, thereby blocking neuronal transmission. This toxin has a strong analgesic effect when administered to mice by intraperitoneal injection. This is Neurotoxin BmK AGP-SYPU1 from Olivierus martensii (Manchurian scorpion).